Reading from the N-terminus, the 61-residue chain is Small ribosomal subunit protein uS14 (61 aa).

Residues cysteine 24, cysteine 27, cysteine 40, and cysteine 43 each contribute to the Zn(2+) site.

This sequence belongs to the universal ribosomal protein uS14 family. Zinc-binding uS14 subfamily. Part of the 30S ribosomal subunit. Contacts proteins S3 and S10. Zn(2+) is required as a cofactor.

Functionally, binds 16S rRNA, required for the assembly of 30S particles and may also be responsible for determining the conformation of the 16S rRNA at the A site. The sequence is that of Small ribosomal subunit protein uS14 from Petrotoga mobilis (strain DSM 10674 / SJ95).